Here is a 207-residue protein sequence, read N- to C-terminus: Small ribosomal subunit protein uS4A (207 aa).

One can recognise an S4 RNA-binding domain in the interval 98 to 161; sequence RRLDNVVYRM…REHKRIKELA (64 aa).

It belongs to the universal ribosomal protein uS4 family. As to quaternary structure, part of the 30S ribosomal subunit. Contacts protein S5. The interaction surface between S4 and S5 is involved in control of translational fidelity.

One of the primary rRNA binding proteins, it binds directly to 16S rRNA where it nucleates assembly of the body of the 30S subunit. In terms of biological role, with S5 and S12 plays an important role in translational accuracy. This Symbiobacterium thermophilum (strain DSM 24528 / JCM 14929 / IAM 14863 / T) protein is Small ribosomal subunit protein uS4A.